The chain runs to 432 residues: Adenylosuccinate lyase (432 aa).

N(6)-(1,2-dicarboxyethyl)-AMP-binding positions include 4–5 (RY), 67–69 (RHD), and 93–94 (TS). His141 functions as the Proton donor/acceptor in the catalytic mechanism. Gln212 is a binding site for N(6)-(1,2-dicarboxyethyl)-AMP. Ser262 (proton donor/acceptor) is an active-site residue. N(6)-(1,2-dicarboxyethyl)-AMP contacts are provided by residues Ser263, 268–270 (KRN), Asn276, and 307–311 (SAERI).

Belongs to the lyase 1 family. Adenylosuccinate lyase subfamily. As to quaternary structure, homodimer and homotetramer. Residues from neighboring subunits contribute catalytic and substrate-binding residues to each active site.

The enzyme catalyses N(6)-(1,2-dicarboxyethyl)-AMP = fumarate + AMP. It catalyses the reaction (2S)-2-[5-amino-1-(5-phospho-beta-D-ribosyl)imidazole-4-carboxamido]succinate = 5-amino-1-(5-phospho-beta-D-ribosyl)imidazole-4-carboxamide + fumarate. It functions in the pathway purine metabolism; AMP biosynthesis via de novo pathway; AMP from IMP: step 2/2. It participates in purine metabolism; IMP biosynthesis via de novo pathway; 5-amino-1-(5-phospho-D-ribosyl)imidazole-4-carboxamide from 5-amino-1-(5-phospho-D-ribosyl)imidazole-4-carboxylate: step 2/2. Catalyzes two reactions in de novo purine nucleotide biosynthesis. Catalyzes the breakdown of 5-aminoimidazole- (N-succinylocarboxamide) ribotide (SAICAR or 2-[5-amino-1-(5-phospho-beta-D-ribosyl)imidazole-4-carboxamido]succinate) to 5-aminoimidazole-4-carboxamide ribotide (AICAR or 5-amino-1-(5-phospho-beta-D-ribosyl)imidazole-4-carboxamide) and fumarate, and of adenylosuccinate (ADS or N(6)-(1,2-dicarboxyethyl)-AMP) to adenosine monophosphate (AMP) and fumarate. The sequence is that of Adenylosuccinate lyase (purB) from Streptococcus mutans serotype c (strain ATCC 700610 / UA159).